The primary structure comprises 484 residues: Endoglucanase 9 (484 aa).

Residues 1–21 (MTSLFFFVLLFSSLLISNGDA) form the signal peptide. The active-site Nucleophile is aspartate 77. Active-site residues include histidine 402, aspartate 453, and glutamate 462.

This sequence belongs to the glycosyl hydrolase 9 (cellulase E) family. In terms of tissue distribution, specifically expressed in root cap cells.

The protein localises to the secreted. Its subcellular location is the cell wall. The catalysed reaction is Endohydrolysis of (1-&gt;4)-beta-D-glucosidic linkages in cellulose, lichenin and cereal beta-D-glucans.. This Arabidopsis thaliana (Mouse-ear cress) protein is Endoglucanase 9 (CEL3).